The following is a 700-amino-acid chain: Methionine--tRNA ligase (700 aa).

Residues 13-23 (PYANGDIHLGH) carry the 'HIGH' region motif. Zn(2+)-binding residues include Cys144, Cys147, Cys157, and Cys160. The 'KMSKS' region motif lies at 341–345 (KMSKS). Lys344 is an ATP binding site. Positions 562 to 587 (QVGAPTASQDDKAAAKNTSPAAMPSS) are disordered. A compositionally biased stretch (polar residues) spans 577–587 (KNTSPAAMPSS). The tRNA-binding domain occupies 598-700 (DFAKVEMKVA…DEAVIGDSLA (103 aa)).

It belongs to the class-I aminoacyl-tRNA synthetase family. MetG type 1 subfamily. In terms of assembly, homodimer. Requires Zn(2+) as cofactor.

The protein resides in the cytoplasm. The enzyme catalyses tRNA(Met) + L-methionine + ATP = L-methionyl-tRNA(Met) + AMP + diphosphate. Is required not only for elongation of protein synthesis but also for the initiation of all mRNA translation through initiator tRNA(fMet) aminoacylation. The protein is Methionine--tRNA ligase of Psychrobacter cryohalolentis (strain ATCC BAA-1226 / DSM 17306 / VKM B-2378 / K5).